We begin with the raw amino-acid sequence, 230 residues long: tRNA (guanine-N(7)-)-methyltransferase (230 aa).

Residues E61, E86, D113, and D135 each contribute to the S-adenosyl-L-methionine site. D135 is a catalytic residue. Residues K139, D171, and 209–212 (TRYE) each bind substrate.

The protein belongs to the class I-like SAM-binding methyltransferase superfamily. TrmB family.

It catalyses the reaction guanosine(46) in tRNA + S-adenosyl-L-methionine = N(7)-methylguanosine(46) in tRNA + S-adenosyl-L-homocysteine. It participates in tRNA modification; N(7)-methylguanine-tRNA biosynthesis. Functionally, catalyzes the formation of N(7)-methylguanine at position 46 (m7G46) in tRNA. In Rhizobium etli (strain ATCC 51251 / DSM 11541 / JCM 21823 / NBRC 15573 / CFN 42), this protein is tRNA (guanine-N(7)-)-methyltransferase.